The primary structure comprises 298 residues: KH domain-containing protein At1g09660/At1g09670 (298 aa).

The 68-residue stretch at 152–219 (DVPVDKYPSY…EHLCEPLHVL (68 aa)) folds into the KH domain. Residues 266-298 (NGTLREESPSPSLSPCLSPSMSPFNSKRAKTEI) are disordered. Phosphoserine occurs at positions 273 and 287. Residues 274-288 (PSPSLSPCLSPSMSP) show a composition bias toward low complexity.

The protein resides in the nucleus. The polypeptide is KH domain-containing protein At1g09660/At1g09670 (Arabidopsis thaliana (Mouse-ear cress)).